The chain runs to 152 residues: Superoxide dismutase [Cu-Zn] 2 (152 aa).

Asn-9 and Asn-33 each carry an N-linked (GlcNAc...) asparagine glycan. 3 residues coordinate Cu cation: His-45, His-47, and His-62. An intrachain disulfide couples Cys-56 to Cys-145. The Zn(2+) site is built by His-62, His-70, His-79, and Asp-82. The N-linked (GlcNAc...) asparagine glycan is linked to Asn-85. His-119 is a binding site for Cu cation.

It belongs to the Cu-Zn superoxide dismutase family. Cu cation is required as a cofactor. Zn(2+) serves as cofactor. Expressed in fruits, leaves and pollen grains.

The protein resides in the cytoplasm. It localises to the endoplasmic reticulum. The catalysed reaction is 2 superoxide + 2 H(+) = H2O2 + O2. Its activity is regulated as follows. Inhibited by KCN and H(2)O(2). In terms of biological role, destroys radicals which are normally produced within the cells and which are toxic to biological systems. Probably involved in the protection against oxidative stress during pollen development. The polypeptide is Superoxide dismutase [Cu-Zn] 2 (OLE5) (Olea europaea (Common olive)).